A 108-amino-acid polypeptide reads, in one-letter code: UPF0235 protein RPB_0109 (108 aa).

The protein belongs to the UPF0235 family.

The sequence is that of UPF0235 protein RPB_0109 from Rhodopseudomonas palustris (strain HaA2).